We begin with the raw amino-acid sequence, 101 residues long: NAD(P)H-quinone oxidoreductase subunit 4L, chloroplastic (101 aa).

Transmembrane regions (helical) follow at residues 2-22, 32-52, and 61-81; these read MLEH…YGLI, MCLE…SDFF, and IFSI…PAIV.

It belongs to the complex I subunit 4L family. In terms of assembly, NDH is composed of at least 16 different subunits, 5 of which are encoded in the nucleus.

The protein resides in the plastid. It is found in the chloroplast thylakoid membrane. It carries out the reaction a plastoquinone + NADH + (n+1) H(+)(in) = a plastoquinol + NAD(+) + n H(+)(out). The catalysed reaction is a plastoquinone + NADPH + (n+1) H(+)(in) = a plastoquinol + NADP(+) + n H(+)(out). In terms of biological role, NDH shuttles electrons from NAD(P)H:plastoquinone, via FMN and iron-sulfur (Fe-S) centers, to quinones in the photosynthetic chain and possibly in a chloroplast respiratory chain. The immediate electron acceptor for the enzyme in this species is believed to be plastoquinone. Couples the redox reaction to proton translocation, and thus conserves the redox energy in a proton gradient. In Vitis vinifera (Grape), this protein is NAD(P)H-quinone oxidoreductase subunit 4L, chloroplastic.